The primary structure comprises 433 residues: Inward rectifier potassium channel 18 (433 aa).

The Cytoplasmic portion of the chain corresponds to 1-77 (MTAASRANPY…LADMFTTCVD (77 aa)). The chain crosses the membrane as a helical span at residues 78-104 (IRWRYMLLIFSLAFLASWLLFGVIFWV). Residues 105–129 (IAVAHGDLEPAEGHGRTPCVMQVHG) are Extracellular-facing. The segment at residues 130 to 146 (FMAAFLFSIETQTTIGY) is an intramembrane region (helical; Pore-forming). The Selectivity filter motif lies at 143–148 (TIGYGL). Over 147–155 (GLRCVTEEC) the chain is Extracellular. Residues 156–183 (LVAVFMVVAQSIVGCIIDSFMIGAIMAK) form a helical membrane-spanning segment. The Cytoplasmic segment spans residues 184–433 (MARPKKRAQT…QRPYRRGSEI (250 aa)). The segment at 387-433 (DEEDEADGDQDGRSRDGLSPQARHDFDRLQAGGGVLEQRPYRRGSEI) is disordered. Basic and acidic residues predominate over residues 396–414 (QDGRSRDGLSPQARHDFDR).

This sequence belongs to the inward rectifier-type potassium channel (TC 1.A.2.1) family. KCNJ12 subfamily. In terms of assembly, can form heteromeric channels with Kir2.1/KCNJ2. Can form heteromeric channels with Kir2.2/KCNJ12. Probably phosphorylated by PKC; decreases single-channel open probability. As to expression, specifically expressed in skeletal muscle.

The protein localises to the cell membrane. It localises to the endoplasmic reticulum. It catalyses the reaction K(+)(in) = K(+)(out). Its function is as follows. Inward rectifier potassium channels are characterized by a greater tendency to allow potassium to flow into the cell rather than out of it. Their voltage dependence is regulated by the concentration of extracellular potassium; as external potassium is raised, the voltage range of the channel opening shifts to more positive voltages. The inward rectification is mainly due to the blockage of outward current by internal magnesium. The sequence is that of Inward rectifier potassium channel 18 (KCNJ18) from Homo sapiens (Human).